A 453-amino-acid chain; its full sequence is UDP-N-acetylmuramoylalanine--D-glutamate ligase (453 aa).

An ATP-binding site is contributed by 120 to 126 (GSNGKST).

The protein belongs to the MurCDEF family.

The protein localises to the cytoplasm. The catalysed reaction is UDP-N-acetyl-alpha-D-muramoyl-L-alanine + D-glutamate + ATP = UDP-N-acetyl-alpha-D-muramoyl-L-alanyl-D-glutamate + ADP + phosphate + H(+). The protein operates within cell wall biogenesis; peptidoglycan biosynthesis. Its function is as follows. Cell wall formation. Catalyzes the addition of glutamate to the nucleotide precursor UDP-N-acetylmuramoyl-L-alanine (UMA). This Teredinibacter turnerae (strain ATCC 39867 / T7901) protein is UDP-N-acetylmuramoylalanine--D-glutamate ligase.